Reading from the N-terminus, the 203-residue chain is ESCRT-related protein CHMP1B (203 aa).

Coiled coils occupy residues 13 to 51 and 109 to 140; these read DLKF…MDGA and GNLQ…NAMA. Residues 172-203 form a disordered region; the sequence is PQPAGHAIPTKTEEKVDEDDLSRRLAELKARG. Positions 192–203 are enriched in basic and acidic residues; sequence LSRRLAELKARG.

Belongs to the SNF7 family. As to quaternary structure, interacts with CHMP1A and LIP5. Interacts with VPS2.2.

It is found in the cytoplasm. The protein localises to the endosome membrane. Its function is as follows. Involved in ESCRT-dependent multivesicular body (MVB) formation and sorting of endosomal cargo proteins into MVBs. Mediates the MVB sorting of the auxin carriers PIN1, PIN2 and AUX1. Required for embryonic axis establishment and seedling growth. Required for autophagic degradation of plastid proteins. Promotes the efficient sequestration of cargo from plastids into autophagosomes. Mediates the efficient delivery of autophagic plastid bodies to the vacuole, but not into the cytoplasm. This chain is ESCRT-related protein CHMP1B, found in Arabidopsis thaliana (Mouse-ear cress).